Consider the following 270-residue polypeptide: 2-epi-5-epi-valiolone 7-phosphate 2-epimerase (270 aa).

Residues Glu-143 and Glu-236 each act as proton donor/acceptor in the active site.

The protein belongs to the hyi family.

The enzyme catalyses 2-epi-5-epi-valiolone 7-phosphate = 5-epi-valiolone 7-phosphate. In terms of biological role, involved in the biosynthesis of the alpha-glucosidase inhibitor acarbose. Catalyzes the 2-epimerisation of 2-epi-5-epivaliolone 7-phosphate to yield 5-epi-valiolone 7-phosphate. This is 2-epi-5-epi-valiolone 7-phosphate 2-epimerase (acbO) from Actinoplanes sp. (strain ATCC 31044 / CBS 674.73 / SE50/110).